Here is a 556-residue protein sequence, read N- to C-terminus: Formate--tetrahydrofolate ligase 1 (556 aa).

Residue 65 to 72 (TPAGEGKS) participates in ATP binding.

It belongs to the formate--tetrahydrofolate ligase family.

It catalyses the reaction (6S)-5,6,7,8-tetrahydrofolate + formate + ATP = (6R)-10-formyltetrahydrofolate + ADP + phosphate. Its pathway is one-carbon metabolism; tetrahydrofolate interconversion. This Streptococcus pyogenes serotype M2 (strain MGAS10270) protein is Formate--tetrahydrofolate ligase 1.